The following is a 201-amino-acid chain: MSRYRGPRFKKIRRLGALPGLTSKSPKAGSDLRNQLRSGKRSQYRIRLEEKQKLRFHYGLTERQLLKYVRIAGKAKGSTGQVLLQLLEMRLDNILFRLGMASTIPGARQLVNHRHILVNGRIVDIPSYRCKPRDIITTRDEQKSRALIQNYLDSSSHEELPKHLTLHSFQYKGLVNQIIDSKWVGLQINELLVVEYYSRQT.

The tract at residues 19–38 is disordered; sequence PGLTSKSPKAGSDLRNQLRS. In terms of domain architecture, S4 RNA-binding spans 89–149; sequence MRLDNILFRL…DEQKSRALIQ (61 aa).

This sequence belongs to the universal ribosomal protein uS4 family. In terms of assembly, part of the 30S ribosomal subunit. Contacts protein S5. The interaction surface between S4 and S5 is involved in control of translational fidelity.

The protein resides in the plastid. The protein localises to the chloroplast. In terms of biological role, one of the primary rRNA binding proteins, it binds directly to 16S rRNA where it nucleates assembly of the body of the 30S subunit. Its function is as follows. With S5 and S12 plays an important role in translational accuracy. The polypeptide is Small ribosomal subunit protein uS4c (rps4) (Platanus occidentalis (Sycamore)).